Consider the following 566-residue polypeptide: Arginine--tRNA ligase (566 aa).

A 'HIGH' region motif is present at residues 124–134; sequence ANPNGPLHIGH.

It belongs to the class-I aminoacyl-tRNA synthetase family.

It localises to the cytoplasm. The catalysed reaction is tRNA(Arg) + L-arginine + ATP = L-arginyl-tRNA(Arg) + AMP + diphosphate. In Methanocaldococcus jannaschii (strain ATCC 43067 / DSM 2661 / JAL-1 / JCM 10045 / NBRC 100440) (Methanococcus jannaschii), this protein is Arginine--tRNA ligase (argS).